Consider the following 404-residue polypeptide: Probable tRNA sulfurtransferase (404 aa).

A THUMP domain is found at 60–165 (QPIVEALKLV…DEAAYISYEE (106 aa)). ATP contacts are provided by residues 183–184 (ML), 208–209 (HF), Arg265, Gly287, and Gln296.

The protein belongs to the ThiI family.

The protein localises to the cytoplasm. It catalyses the reaction [ThiI sulfur-carrier protein]-S-sulfanyl-L-cysteine + a uridine in tRNA + 2 reduced [2Fe-2S]-[ferredoxin] + ATP + H(+) = [ThiI sulfur-carrier protein]-L-cysteine + a 4-thiouridine in tRNA + 2 oxidized [2Fe-2S]-[ferredoxin] + AMP + diphosphate. The enzyme catalyses [ThiS sulfur-carrier protein]-C-terminal Gly-Gly-AMP + S-sulfanyl-L-cysteinyl-[cysteine desulfurase] + AH2 = [ThiS sulfur-carrier protein]-C-terminal-Gly-aminoethanethioate + L-cysteinyl-[cysteine desulfurase] + A + AMP + 2 H(+). Its pathway is cofactor biosynthesis; thiamine diphosphate biosynthesis. Catalyzes the ATP-dependent transfer of a sulfur to tRNA to produce 4-thiouridine in position 8 of tRNAs, which functions as a near-UV photosensor. Also catalyzes the transfer of sulfur to the sulfur carrier protein ThiS, forming ThiS-thiocarboxylate. This is a step in the synthesis of thiazole, in the thiamine biosynthesis pathway. The sulfur is donated as persulfide by IscS. This Streptococcus pyogenes serotype M3 (strain ATCC BAA-595 / MGAS315) protein is Probable tRNA sulfurtransferase.